Here is a 160-residue protein sequence, read N- to C-terminus: Protein-export protein SecB (160 aa).

Belongs to the SecB family. In terms of assembly, homotetramer, a dimer of dimers. One homotetramer interacts with 1 SecA dimer.

It is found in the cytoplasm. Functionally, one of the proteins required for the normal export of preproteins out of the cell cytoplasm. It is a molecular chaperone that binds to a subset of precursor proteins, maintaining them in a translocation-competent state. It also specifically binds to its receptor SecA. The sequence is that of Protein-export protein SecB from Burkholderia multivorans (strain ATCC 17616 / 249).